The primary structure comprises 877 residues: Alanine--tRNA ligase (877 aa).

Residues histidine 562, histidine 566, cysteine 664, and histidine 668 each contribute to the Zn(2+) site.

The protein belongs to the class-II aminoacyl-tRNA synthetase family. It depends on Zn(2+) as a cofactor.

Its subcellular location is the cytoplasm. It carries out the reaction tRNA(Ala) + L-alanine + ATP = L-alanyl-tRNA(Ala) + AMP + diphosphate. Catalyzes the attachment of alanine to tRNA(Ala) in a two-step reaction: alanine is first activated by ATP to form Ala-AMP and then transferred to the acceptor end of tRNA(Ala). Also edits incorrectly charged Ser-tRNA(Ala) and Gly-tRNA(Ala) via its editing domain. This chain is Alanine--tRNA ligase, found in Synechocystis sp. (strain ATCC 27184 / PCC 6803 / Kazusa).